The primary structure comprises 250 residues: MRRKIVVGNWKMNKTVAESTELASAVVAALGSDCSACEAGIAPTYPALDSVGRTIKGSEVLLVAQNCHYEDDGAFTGEVSTGMLNALGCSYVIIGHSERRQYFGETDATVNLRIKKVLAAGMKAILCVGETLEERESGAFEAVVSTQVTGGLQGVVDISDIVIAYEPVWAIGTGRTASSEQAQEVHKIIRNKVAELYGAPAADAVRIQYGGSVKPSNAAELFAMPDIDGGLIGGAALKAEDFAAIVKAAC.

A substrate-binding site is contributed by 9–11 (NWK). Residue histidine 96 is the Electrophile of the active site. Catalysis depends on glutamate 166, which acts as the Proton acceptor. Substrate contacts are provided by residues glycine 172, serine 212, and 233 to 234 (GG).

This sequence belongs to the triosephosphate isomerase family. As to quaternary structure, homodimer.

Its subcellular location is the cytoplasm. The catalysed reaction is D-glyceraldehyde 3-phosphate = dihydroxyacetone phosphate. It participates in carbohydrate biosynthesis; gluconeogenesis. It functions in the pathway carbohydrate degradation; glycolysis; D-glyceraldehyde 3-phosphate from glycerone phosphate: step 1/1. Involved in the gluconeogenesis. Catalyzes stereospecifically the conversion of dihydroxyacetone phosphate (DHAP) to D-glyceraldehyde-3-phosphate (G3P). The protein is Triosephosphate isomerase of Chlorobium phaeovibrioides (strain DSM 265 / 1930) (Prosthecochloris vibrioformis (strain DSM 265)).